The sequence spans 309 residues: MITIVGSGRVGATTAAFLMFYELDNEVTLIDVIKGLPQGEALDLNHAAAILGKSVRYKGSNDYKDMEGSDIVIVTAGLARKPGMTREELAGKNAEIISSIADQIKKYAPNSIVIITTNPLDAMVYVLYKRLGFPRNRVIGFSGVLDSNRMAYYASQIIGIAPESIIPVVLGQHGENMYPVPEASFVYGKPLTEFLTQEQYNDIVKKTIQAGADITNLRGFSSNWGPAAGLALMVDSIKKNRRRVFEASVYLDGEYGVKDVFAEVPVVLGKNGVEKIIELNLTPEQRQKFMQSIEAVKKNLTQVPPQYLK.

NAD(+) contacts are provided by residues 6–11 (GSGRVG) and D31. Residues R80 and R86 each contribute to the substrate site. NAD(+) contacts are provided by residues N93 and 116–118 (TTN). 2 residues coordinate substrate: N118 and R149. The active-site Proton acceptor is the H173.

Belongs to the LDH/MDH superfamily.

It catalyses the reaction (S)-malate + NAD(+) = oxaloacetate + NADH + H(+). Catalyzes the reversible oxidation of malate to oxaloacetate. The chain is Malate dehydrogenase (mdh) from Caldivirga maquilingensis (strain ATCC 700844 / DSM 13496 / JCM 10307 / IC-167).